The sequence spans 199 residues: Pyridoxal 5'-phosphate synthase subunit PdxT (199 aa).

Residue 51-53 participates in L-glutamine binding; sequence GES. Cys83 serves as the catalytic Nucleophile. Residues Arg110 and 137-138 each bind L-glutamine; that span reads IR. Residues His172 and Glu174 each act as charge relay system in the active site.

Belongs to the glutaminase PdxT/SNO family. In the presence of PdxS, forms a dodecamer of heterodimers. Only shows activity in the heterodimer.

It carries out the reaction aldehydo-D-ribose 5-phosphate + D-glyceraldehyde 3-phosphate + L-glutamine = pyridoxal 5'-phosphate + L-glutamate + phosphate + 3 H2O + H(+). It catalyses the reaction L-glutamine + H2O = L-glutamate + NH4(+). It functions in the pathway cofactor biosynthesis; pyridoxal 5'-phosphate biosynthesis. Catalyzes the hydrolysis of glutamine to glutamate and ammonia as part of the biosynthesis of pyridoxal 5'-phosphate. The resulting ammonia molecule is channeled to the active site of PdxS. This chain is Pyridoxal 5'-phosphate synthase subunit PdxT, found in Thermoplasma volcanium (strain ATCC 51530 / DSM 4299 / JCM 9571 / NBRC 15438 / GSS1).